The sequence spans 255 residues: Ribonuclease HII (255 aa).

The region spanning 70-255 (DLVAGIDEVG…FEPVPEFLIK (186 aa)) is the RNase H type-2 domain. A divalent metal cation-binding residues include D76, E77, and D168.

Belongs to the RNase HII family. Mn(2+) serves as cofactor. The cofactor is Mg(2+).

The protein resides in the cytoplasm. It carries out the reaction Endonucleolytic cleavage to 5'-phosphomonoester.. Endonuclease that specifically degrades the RNA of RNA-DNA hybrids. The chain is Ribonuclease HII from Pediococcus pentosaceus (strain ATCC 25745 / CCUG 21536 / LMG 10740 / 183-1w).